The primary structure comprises 90 residues: Probable Fe(2+)-trafficking protein (90 aa).

This sequence belongs to the Fe(2+)-trafficking protein family.

In terms of biological role, could be a mediator in iron transactions between iron acquisition and iron-requiring processes, such as synthesis and/or repair of Fe-S clusters in biosynthetic enzymes. The sequence is that of Probable Fe(2+)-trafficking protein from Nitrosomonas europaea (strain ATCC 19718 / CIP 103999 / KCTC 2705 / NBRC 14298).